A 544-amino-acid polypeptide reads, in one-letter code: MAAKQLIFDESARHALLRGVEKLSKAVKCTLGPAGRNVILDKKFGSPTITKDGVTVAKEVELEDPWENMGAQLVKEVASKTSDVAGDGTTTATVLAESIYKEGLKNVTAGANPMDLKRGVDKAVQAVVKQLKEISHIVKGKEEIKQVATVSANWDTSIGEIIADALDKVGKDGTVTVEEAKHIETTLEVVEGMQFDRGYISPYFVTNAEELEAVLENAYILIHEKKISNLKDLLPLLEKIAKAGRPLLIIAEDVEGEALATLVVNKLRGTLQVCAVKAPGFGDRRKAMLEDIAILTGGRCLTEDLGIKLENVQLEDLGRAKRIIVEKENTTIIEGSGSRSEIQGRINQIRRQIEETTSDYDREKLQERLAKLAGGVAVIHVGAATETELKEKKARVEDALHATRAAVEEGIVPGGGVALLRCQKAIEGLSLKGDEQIGANIVYKALEYPLKTLADNAGLEGSVIVNEVKAKKGNEGFDVAKRSYVDMFEAGIVDPTKVTRTALENAASIAGLLLTTEAMVTEIPEKEKKPATPAGAGGMGDMEY.

ATP is bound by residues 30 to 33 (TLGP), Lys-51, 87 to 91 (DGTTT), Gly-415, 478 to 480 (DVA), and Asp-494. The tract at residues 524 to 544 (PEKEKKPATPAGAGGMGDMEY) is disordered. The segment covering 535–544 (GAGGMGDMEY) has biased composition (gly residues).

It belongs to the chaperonin (HSP60) family. Forms a cylinder of 14 subunits composed of two heptameric rings stacked back-to-back. Interacts with the co-chaperonin GroES.

It is found in the cytoplasm. It catalyses the reaction ATP + H2O + a folded polypeptide = ADP + phosphate + an unfolded polypeptide.. In terms of biological role, together with its co-chaperonin GroES, plays an essential role in assisting protein folding. The GroEL-GroES system forms a nano-cage that allows encapsulation of the non-native substrate proteins and provides a physical environment optimized to promote and accelerate protein folding. The chain is Chaperonin GroEL from Methylacidiphilum infernorum (isolate V4) (Methylokorus infernorum (strain V4)).